Here is an 85-residue protein sequence, read N- to C-terminus: Conotoxin Lt28.5 (85 aa).

The signal sequence occupies residues 1–21 (MPKLEMMLLVLLILPLCYIDA). The propeptide occupies 22–40 (VGPPPPWNMEDEIIEHWQK).

The protein belongs to the conotoxin D superfamily. In terms of processing, contains 5 disulfide bonds. In terms of tissue distribution, expressed by the venom duct.

Its subcellular location is the secreted. Functionally, probable neurotoxin. This Conus litteratus (Lettered cone) protein is Conotoxin Lt28.5.